The primary structure comprises 138 residues: Nucleoside diphosphate kinase (138 aa).

K9, F57, R85, T91, R102, and N112 together coordinate ATP. The active-site Pros-phosphohistidine intermediate is H115.

This sequence belongs to the NDK family. As to quaternary structure, homotetramer. Mg(2+) serves as cofactor.

Its subcellular location is the cytoplasm. The enzyme catalyses a 2'-deoxyribonucleoside 5'-diphosphate + ATP = a 2'-deoxyribonucleoside 5'-triphosphate + ADP. The catalysed reaction is a ribonucleoside 5'-diphosphate + ATP = a ribonucleoside 5'-triphosphate + ADP. Functionally, major role in the synthesis of nucleoside triphosphates other than ATP. The ATP gamma phosphate is transferred to the NDP beta phosphate via a ping-pong mechanism, using a phosphorylated active-site intermediate. In Deinococcus geothermalis (strain DSM 11300 / CIP 105573 / AG-3a), this protein is Nucleoside diphosphate kinase.